Here is a 560-residue protein sequence, read N- to C-terminus: Excitatory amino acid transporter 5 (560 aa).

At 1-16 (MVPHAILARGRDVCRR) the chain is on the cytoplasmic side. The next 3 helical transmembrane spans lie at 17–37 (NGLL…GFFL), 60–80 (MLKM…LASL), and 94–114 (AYYL…VSII). Residues 115–216 (HPGSAAQKET…EVVYKSEPGT (102 aa)) lie on the Extracellular side of the membrane. Asn-191 carries an N-linked (GlcNAc...) asparagine glycan. 7 consecutive transmembrane segments (helical) span residues 217-237 (SDGM…IMLG), 260-280 (IVAV…AGKI), 300-320 (VVCG…FFIT), 330-350 (GILQ…TLPI), 372-392 (VGAT…AIFI), 414-434 (AASI…VIVL), and 457-477 (FRTM…AHIC).

The protein belongs to the dicarboxylate/amino acid:cation symporter (DAACS) (TC 2.A.23) family. SLC1A7 subfamily. Interacts with the PDZ domains of DLG4. In terms of tissue distribution, expressed primarily in retina. Detectable in liver, heart, muscle and brain.

The protein localises to the photoreceptor inner segment membrane. Its subcellular location is the synaptic cell membrane. It catalyses the reaction K(+)(in) + L-glutamate(out) + 3 Na(+)(out) + H(+)(out) = K(+)(out) + L-glutamate(in) + 3 Na(+)(in) + H(+)(in). The catalysed reaction is K(+)(in) + L-aspartate(out) + 3 Na(+)(out) + H(+)(out) = K(+)(out) + L-aspartate(in) + 3 Na(+)(in) + H(+)(in). It carries out the reaction D-aspartate(out) + K(+)(in) + 3 Na(+)(out) + H(+)(out) = D-aspartate(in) + K(+)(out) + 3 Na(+)(in) + H(+)(in). Sodium-dependent, high-affinity amino acid transporter that mediates the uptake of L-glutamate and also L-aspartate and D-aspartate. Functions as a symporter that transports one amino acid molecule together with two or three Na(+) ions and one proton, in parallel with the counter-transport of one K(+) ion. Acts primarily as an inhibitory glutamate-gated chloride channel being a major inhibitory presynaptic receptor at mammalian rod bipolar cell axon terminals. Glutamate binding gates a large Cl(-) conductance that mediates inhibition, affecting visual processing in the retina. This is Excitatory amino acid transporter 5 from Homo sapiens (Human).